Reading from the N-terminus, the 696-residue chain is Polyribonucleotide nucleotidyltransferase (696 aa).

The Mg(2+) site is built by Asp-489 and Asp-495. The KH domain occupies 556–615; sequence PQYVTMKINPEKIRDVIGKGGVVIREITEATNCAIDISDDGTIKIAAHTTEEGEAAKRRI. The S1 motif domain maps to 625–693; it reads GKVYEGTVVK…RQGRVRLSMK (69 aa).

It belongs to the polyribonucleotide nucleotidyltransferase family. As to quaternary structure, component of the RNA degradosome, which is a multiprotein complex involved in RNA processing and mRNA degradation. Mg(2+) serves as cofactor.

Its subcellular location is the cytoplasm. It catalyses the reaction RNA(n+1) + phosphate = RNA(n) + a ribonucleoside 5'-diphosphate. Its function is as follows. Involved in mRNA degradation. Catalyzes the phosphorolysis of single-stranded polyribonucleotides processively in the 3'- to 5'-direction. This Coxiella burnetii (strain CbuK_Q154) (Coxiella burnetii (strain Q154)) protein is Polyribonucleotide nucleotidyltransferase.